Here is a 522-residue protein sequence, read N- to C-terminus: Glutathione reductase, mitochondrial (522 aa).

Residues 1 to 43 (MALLPRALSAGAGPSWRRAARAFRGFLLLLPEPAALTRALSRA) constitute a mitochondrion transit peptide. Residues serine 74 and glycine 75 each coordinate FAD. Residue serine 74 participates in glutathione binding. Arginine 81 provides a ligand contact to glutathione. Glutamate 94 provides a ligand contact to FAD. Lysine 97 is modified (N6-acetyllysine). Residues threonine 101, cysteine 102, and lysine 110 each contribute to the FAD site. Cysteine 102 and cysteine 107 form a disulfide bridge. Tyrosine 158 is a glutathione binding site. Alanine 174 provides a ligand contact to FAD. The NADP(+) site is built by alanine 239, isoleucine 242, glutamate 245, arginine 262, arginine 268, and glycine 334. Aspartate 375 contributes to the FAD binding site. Residue leucine 381 participates in NADP(+) binding. Residue threonine 383 coordinates FAD. Position 391 (arginine 391) interacts with glutathione. Valine 414 contributes to the NADP(+) binding site. Histidine 511 is a binding site for FAD. The active-site Proton acceptor is the histidine 511.

Belongs to the class-I pyridine nucleotide-disulfide oxidoreductase family. Homodimer; disulfide-linked. It depends on FAD as a cofactor.

It localises to the mitochondrion. Its subcellular location is the cytoplasm. It catalyses the reaction 2 glutathione + NADP(+) = glutathione disulfide + NADPH + H(+). In terms of biological role, catalyzes the reduction of glutathione disulfide (GSSG) to reduced glutathione (GSH). Constitutes the major mechanism to maintain a high GSH:GSSG ratio in the cytosol. This chain is Glutathione reductase, mitochondrial (GSR), found in Homo sapiens (Human).